Reading from the N-terminus, the 50-residue chain is Small ribosomal subunit protein uS14 (50 aa).

Zn(2+) contacts are provided by Cys15, Cys18, Cys33, and Cys36.

Belongs to the universal ribosomal protein uS14 family. Zinc-binding uS14 subfamily. Part of the 30S ribosomal subunit. The cofactor is Zn(2+).

In terms of biological role, binds 16S rRNA, required for the assembly of 30S particles. This Methanothermobacter thermautotrophicus (strain ATCC 29096 / DSM 1053 / JCM 10044 / NBRC 100330 / Delta H) (Methanobacterium thermoautotrophicum) protein is Small ribosomal subunit protein uS14.